A 268-amino-acid polypeptide reads, in one-letter code: MSLSFLLLLFFSHLILSAWAHGEKRLAPKGQPGPAATDRNPRGSSSRQSSSSAMSSSSASSSPAASLGSQGSGLEQSSFQWSPSGRRTGSLYCRVGIGFHLQIYPDGKVNGSHEANMLSVLEIFAVSQGIVGIRGVFSNKFLAMSKKGKLHASAKFTDDCKFRERFQENSYNTYASAIHRTEKTGREWYVALNKRGKAKRGCSPRVKPQHISTHFLPRFKQSEQPELSFTVTVPEKKKPPSPIKPKIPLSAPRKNTNSVKYRLKFRFG.

Positions 1–20 (MSLSFLLLLFFSHLILSAWA) are cleaved as a signal peptide. The disordered stretch occupies residues 26-81 (LAPKGQPGPAATDRNPRGSSSRQSSSSAMSSSSASSSPAASLGSQGSGLEQSSFQW). The span at 43–80 (GSSSRQSSSSAMSSSSASSSPAASLGSQGSGLEQSSFQ) shows a compositional bias: low complexity. A glycan (N-linked (GlcNAc...) asparagine) is linked at Asn110. Residues 233-255 (VPEKKKPPSPIKPKIPLSAPRKN) form a disordered region.

It belongs to the heparin-binding growth factors family. In terms of assembly, interacts with FGFR1 and FGFR2. Affinity between fibroblast growth factors (FGFs) and their receptors is increased by heparan sulfate glycosaminoglycans that function as coreceptors. In terms of tissue distribution, expressed in neonatal brain.

The protein resides in the secreted. In terms of biological role, plays an important role in the regulation of cell proliferation and cell differentiation. Required for normal regulation of the hair growth cycle. Functions as an inhibitor of hair elongation by promoting progression from anagen, the growth phase of the hair follicle, into catagen the apoptosis-induced regression phase. The sequence is that of Fibroblast growth factor 5 (FGF5) from Homo sapiens (Human).